We begin with the raw amino-acid sequence, 384 residues long: Succinyl-diaminopimelate desuccinylase (384 aa).

His-73 is a Zn(2+) binding site. Residue Asp-75 is part of the active site. Asp-106 is a binding site for Zn(2+). The active-site Proton acceptor is Glu-140. 3 residues coordinate Zn(2+): Glu-141, Glu-169, and His-358.

It belongs to the peptidase M20A family. DapE subfamily. As to quaternary structure, homodimer. Zn(2+) is required as a cofactor. The cofactor is Co(2+).

The enzyme catalyses N-succinyl-(2S,6S)-2,6-diaminopimelate + H2O = (2S,6S)-2,6-diaminopimelate + succinate. Its pathway is amino-acid biosynthesis; L-lysine biosynthesis via DAP pathway; LL-2,6-diaminopimelate from (S)-tetrahydrodipicolinate (succinylase route): step 3/3. Functionally, catalyzes the hydrolysis of N-succinyl-L,L-diaminopimelic acid (SDAP), forming succinate and LL-2,6-diaminopimelate (DAP), an intermediate involved in the bacterial biosynthesis of lysine and meso-diaminopimelic acid, an essential component of bacterial cell walls. The sequence is that of Succinyl-diaminopimelate desuccinylase from Pelagibacter ubique (strain HTCC1062).